Consider the following 144-residue polypeptide: Globin (144 aa).

N-acetylalanine is present on Ala-1. The region spanning 1-144 (ALSAADAGLL…IISALQSAGK (144 aa)) is the Globin domain. His-95 is a binding site for heme b.

Belongs to the globin family. In terms of assembly, monomer.

The chain is Globin from Aplysia juliana (Walking sea hare).